The following is a 984-amino-acid chain: Protein translocase subunit SecA (984 aa).

ATP-binding positions include Q96, 114-118 (GEGKT), and D595. Basic and acidic residues-rich tracts occupy residues 930–942 (EHEEEKKHQRLLE) and 952–971 (KSDKKPRPKTLKERLKEERL). The interval 930-984 (EHEEEKKHQRLLEEAELQGVQGKSDKKPRPKTLKERLKEERLRKRKLKAKKKEQE) is disordered. Over residues 972-984 (RKRKLKAKKKEQE) the composition is skewed to basic residues.

It belongs to the SecA family. As to quaternary structure, monomer and homodimer. Part of the essential Sec protein translocation apparatus which comprises SecA, SecYEG and auxiliary proteins SecDF. Other proteins may also be involved.

It localises to the cell inner membrane. The protein localises to the cytoplasm. The enzyme catalyses ATP + H2O + cellular proteinSide 1 = ADP + phosphate + cellular proteinSide 2.. Functionally, part of the Sec protein translocase complex. Interacts with the SecYEG preprotein conducting channel. Has a central role in coupling the hydrolysis of ATP to the transfer of proteins into and across the cell membrane, serving as an ATP-driven molecular motor driving the stepwise translocation of polypeptide chains across the membrane. The chain is Protein translocase subunit SecA from Aquifex aeolicus (strain VF5).